The primary structure comprises 592 residues: UvrABC system protein C (592 aa).

Residues 15 to 92 (ALPGCYLMKD…IQKHQPYFNI (78 aa)) enclose the GIY-YIG domain. Positions 197–232 (DNVKKDLTEKMATAAQEMQFERAAELRDQLRYIEAT) constitute a UVR domain.

This sequence belongs to the UvrC family. Interacts with UvrB in an incision complex.

It is found in the cytoplasm. The UvrABC repair system catalyzes the recognition and processing of DNA lesions. UvrC both incises the 5' and 3' sides of the lesion. The N-terminal half is responsible for the 3' incision and the C-terminal half is responsible for the 5' incision. The chain is UvrABC system protein C from Latilactobacillus sakei subsp. sakei (strain 23K) (Lactobacillus sakei subsp. sakei).